Consider the following 317-residue polypeptide: Ribose-phosphate pyrophosphokinase (317 aa).

Residues 43 to 45 (DGE) and 102 to 103 (RQ) each bind ATP. ADP contacts are provided by Lys-106 and Arg-110. His-136 is a binding site for Mg(2+). ADP contacts are provided by residues Gln-141 and 149 to 150 (DH). Asp-175 is a Mg(2+) binding site. Lys-198 is an active-site residue. D-ribose 5-phosphate-binding positions include Arg-200, Asp-224, and 228–232 (DTAGT). Residue 311–313 (SVS) participates in ADP binding.

Belongs to the ribose-phosphate pyrophosphokinase family. Class I subfamily. Homohexamer; trimer of dimers. The cofactor is Mg(2+).

It is found in the cytoplasm. It carries out the reaction D-ribose 5-phosphate + ATP = 5-phospho-alpha-D-ribose 1-diphosphate + AMP + H(+). Its pathway is metabolic intermediate biosynthesis; 5-phospho-alpha-D-ribose 1-diphosphate biosynthesis; 5-phospho-alpha-D-ribose 1-diphosphate from D-ribose 5-phosphate (route I): step 1/1. Its activity is regulated as follows. Activated by inorganic phosphate, and to a lesser extent by sulfate ions. In addition to form a complex with ATP, Mg(2+) also acts as a cofactor. Strongly inhibited by ADP through competitive binding at the activation site and at a specific allosteric site. Less strongly inhibited by alpha,beta-methylene ATP (mADP), AMP, GDP, GMP and UTP. Its function is as follows. Involved in the biosynthesis of the central metabolite phospho-alpha-D-ribosyl-1-pyrophosphate (PRPP) via the transfer of pyrophosphoryl group from ATP to 1-hydroxyl of ribose-5-phosphate (Rib-5-P). This chain is Ribose-phosphate pyrophosphokinase, found in Bacillus subtilis (strain 168).